The chain runs to 34 residues: Photosystem II reaction center protein M (34 aa).

Residues 5–25 (ILAFIATALFILIPTAFLLII) traverse the membrane as a helical segment.

This sequence belongs to the PsbM family. As to quaternary structure, PSII is composed of 1 copy each of membrane proteins PsbA, PsbB, PsbC, PsbD, PsbE, PsbF, PsbH, PsbI, PsbJ, PsbK, PsbL, PsbM, PsbT, PsbX, PsbY, PsbZ, Psb30/Ycf12, at least 3 peripheral proteins of the oxygen-evolving complex and a large number of cofactors. It forms dimeric complexes.

The protein resides in the plastid. It is found in the chloroplast thylakoid membrane. Its function is as follows. One of the components of the core complex of photosystem II (PSII). PSII is a light-driven water:plastoquinone oxidoreductase that uses light energy to abstract electrons from H(2)O, generating O(2) and a proton gradient subsequently used for ATP formation. It consists of a core antenna complex that captures photons, and an electron transfer chain that converts photonic excitation into a charge separation. This subunit is found at the monomer-monomer interface. This is Photosystem II reaction center protein M from Agrostis stolonifera (Creeping bentgrass).